The following is a 306-amino-acid chain: MAGSHDFGKVAVLLGGRSAEREISLESGKAVLDALRSSGVDAHPFDPSEQHMDALLQQGYTRAHIALHGRYGEDGTVQGALELLGIPYTGSGVLASALAMDKWRTKLLWQSAGINTPRHILLDEQSDFDAVAKELGLPLIVKPSREGSTIGLSKVREAGEVAAAWHLAARHDAMVLAEQFIEGTELTASILGDVALPLVRIQVEGDLYDYQAKYLSDKTQYFCPSGVSEEQECLIRKQALQAHRLLGCEGWGRVDLILDKSGTPYFLEANTSPGMTTHSLVPMAAKAAGISFEELVLKILGLAHVG.

The ATP-grasp domain maps to 106 to 301; the sequence is KLLWQSAGIN…FEELVLKILG (196 aa). Residue 132–187 participates in ATP binding; sequence AKELGLPLIVKPSREGSTIGLSKVREAGEVAAAWHLAARHDAMVLAEQFIEGTELT. D255, E268, and N270 together coordinate Mg(2+).

Belongs to the D-alanine--D-alanine ligase family. It depends on Mg(2+) as a cofactor. Requires Mn(2+) as cofactor.

The protein resides in the cytoplasm. It catalyses the reaction 2 D-alanine + ATP = D-alanyl-D-alanine + ADP + phosphate + H(+). The protein operates within cell wall biogenesis; peptidoglycan biosynthesis. Cell wall formation. The chain is D-alanine--D-alanine ligase from Nitrosospira multiformis (strain ATCC 25196 / NCIMB 11849 / C 71).